Consider the following 197-residue polypeptide: Nucleoside triphosphate pyrophosphatase (197 aa).

Catalysis depends on Asp-71, which acts as the Proton acceptor.

The protein belongs to the Maf family. A divalent metal cation is required as a cofactor.

It is found in the cytoplasm. The enzyme catalyses a ribonucleoside 5'-triphosphate + H2O = a ribonucleoside 5'-phosphate + diphosphate + H(+). The catalysed reaction is a 2'-deoxyribonucleoside 5'-triphosphate + H2O = a 2'-deoxyribonucleoside 5'-phosphate + diphosphate + H(+). Nucleoside triphosphate pyrophosphatase. May have a dual role in cell division arrest and in preventing the incorporation of modified nucleotides into cellular nucleic acids. The polypeptide is Nucleoside triphosphate pyrophosphatase (Nostoc punctiforme (strain ATCC 29133 / PCC 73102)).